A 356-amino-acid chain; its full sequence is Poly(rC)-binding protein 1 (356 aa).

Position 1 is an N-acetylmethionine (methionine 1). KH domains lie at 13–75 (TLTI…FAMI) and 97–162 (PVTL…VKQI). Lysine 115 is covalently cross-linked (Glycyl lysine isopeptide (Lys-Gly) (interchain with G-Cter in SUMO2)). Phosphoserine occurs at positions 173, 189, 190, 246, 264, and 273. Residues 279–343 (QTTHELTIPN…ASISLAQYLI (65 aa)) form the KH 3 domain.

Post-translationally, phosphorylated; lowers poly(rC)-binding activity.

It localises to the nucleus. It is found in the cytoplasm. In terms of biological role, single-stranded nucleic acid binding protein that binds preferentially to oligo dC. Together with PCBP2, required for erythropoiesis, possibly by regulating mRNA splicing. This chain is Poly(rC)-binding protein 1 (PCBP1), found in Bos taurus (Bovine).